A 169-amino-acid chain; its full sequence is Cilia- and flagella-associated protein HOATZ (169 aa).

Disordered stretches follow at residues Met1–Pro21, Ser52–Asn89, and Lys144–Asp169. The span at Ser75–Asn89 shows a compositional bias: polar residues.

This sequence belongs to the HOATZ family.

The protein resides in the cytoplasm. It is found in the cell projection. It localises to the cilium. Required for motile ciliogenesis and flagellar genesis by mediating the maturation of the glycolytic enzyme ENO4. The polypeptide is Cilia- and flagella-associated protein HOATZ (Homo sapiens (Human)).